Here is a 244-residue protein sequence, read N- to C-terminus: MGLSQLGLWLRRLWVLFQVALQVAVGKVFLILFPSRVKQHIVAMNRKNPHFSYDNWAPTLYSVQYFWFVLKVRWQRLEDRTEPGGLAPNCPVVRLSGQRCSIWDFMKGNRPLVLNFGSCTUPSFLFKFDQFKRLIEDFCSIADFLIIYIEEAHASDGWAFKNNVNIRNHRNLQDRLQAACLLLDRSPRCPVVVDTMKNQSSRLYAALPERLYVLQAGRILYKGKPGPWNYHPEEVRAVLEKLHS.

The Extracellular portion of the chain corresponds to 1 to 12; the sequence is MGLSQLGLWLRR. A helical; Signal-anchor for type III membrane protein membrane pass occupies residues 13–33; it reads LWVLFQVALQVAVGKVFLILF. The Cytoplasmic portion of the chain corresponds to 34-244; the sequence is PSRVKQHIVA…VRAVLEKLHS (211 aa). U121 is a catalytic residue. A non-standard amino acid (selenocysteine) is located at residue U121.

The protein belongs to the iodothyronine deiodinase family. As to quaternary structure, predominantly monomer. Can form homodimers but homodimerization is not essential for enzyme activity.

Its subcellular location is the cell membrane. It is found in the endoplasmic reticulum membrane. The protein localises to the basolateral cell membrane. The enzyme catalyses 3,3',5-triiodo-L-thyronine + iodide + A + H(+) = L-thyroxine + AH2. The catalysed reaction is 3,3',5'-triiodo-L-thyronine + iodide + A + H(+) = L-thyroxine + AH2. It catalyses the reaction 3,3'-diiodo-L-thyronine + iodide + A + H(+) = 3,3',5'-triiodo-L-thyronine + AH2. It carries out the reaction 3,3'-diiodo-L-thyronine + iodide + A + H(+) = 3,3',5-triiodo-L-thyronine + AH2. The enzyme catalyses 3'-iodo-L-thyronine + iodide + A + H(+) = 3',5'-diiodo-L-thyronine + AH2. The catalysed reaction is 3-iodo-L-thyronine + iodide + A + H(+) = 3,5-diiodo-L-thyronine + AH2. It catalyses the reaction 3-iodo-L-thyronine + iodide + A + H(+) = 3,3'-diiodo-L-thyronine + AH2. It carries out the reaction 3,3'-diiodothyronamine + iodide + A + H(+) = 3,3',5'-triiodothyronamine + AH2. The enzyme catalyses 3'-iodothyronamine + iodide + A + H(+) = 3',5'-diiodothyronamine + AH2. The catalysed reaction is 3-iodothyronamine + iodide + A + H(+) = 3,3'-diiodothyronamine + AH2. It catalyses the reaction 3,3'-diiodothyronamine + iodide + A + H(+) = 3,3',5-triiodothyronamine + AH2. It carries out the reaction 3-iodothyronamine + iodide + A + H(+) = 3,5-diiodothyronamine + AH2. The enzyme catalyses 3,3'-diiodo-L-thyronine sulfate + iodide + A + H(+) = 3,3',5'-triiodo-L-thyronine sulfate + AH2. The catalysed reaction is 3,3',5'-triiodo-L-thyronine sulfate + iodide + A + H(+) = L-thyroxine sulfate + AH2. It catalyses the reaction 3,3'-diiodo-L-thyronine sulfate + iodide + A + H(+) = 3,3',5-triiodo-L-thyronine sulfate + AH2. Plays a crucial role in the metabolism of thyroid hormones (TH) and has specific roles in TH activation and inactivation by deiodination. Catalyzes the deiodination of L-thyroxine (T4) to 3,5,3'-triiodothyronine (T3) and 3',5'-diiodothyronine (3',5'-T2) to 3'-monoiodothyronine (3'-T1) via outer-ring deiodination (ORD). Catalyzes the deiodination of T4 to 3,3',5'-triiodothyronine (rT3), T3 to 3,3'-diiodothyronine (3,3'-T2), 3,5-diiodothyronine (3,5-T2) to 3-monoiodothyronine (3-T1) and 3,3'-T2 to 3-T1 via inner-ring deiodination (IRD). Catalyzes the deiodination of rT3 to 3,3'-T2 via ORD. Catalyzes the phenolic ring deiodinations of 3,3',5'-triiodothyronamine, 3',5'-diiodothyronamine and 3,3'-diiodothyronamine as well as tyrosyl ring deiodinations of 3,5,3'-triiodothyronamine and 3,5-diiodothyronamine. Catalyzes the deiodination of L-thyroxine sulfate and 3,3',5-triiodo-L-thyronine sulfate via IRD and of 3,3',5'-triiodo-L-thyronine sulfate via ORD. The sequence is that of Type I iodothyronine deiodinase (DIO1) from Felis catus (Cat).